The chain runs to 383 residues: Queuine tRNA-ribosyltransferase (383 aa).

Residue aspartate 95 is the Proton acceptor of the active site. Substrate is bound by residues 95-99, aspartate 149, glutamine 195, and glycine 222; that span reads DSGGF. An RNA binding region spans residues 253-259; it reads GVGSPDS. Aspartate 272 serves as the catalytic Nucleophile. The RNA binding; important for wobble base 34 recognition stretch occupies residues 277 to 281; it reads TRIAR. Zn(2+) is bound by residues cysteine 310, cysteine 312, cysteine 315, and histidine 341.

This sequence belongs to the queuine tRNA-ribosyltransferase family. As to quaternary structure, homodimer. Within each dimer, one monomer is responsible for RNA recognition and catalysis, while the other monomer binds to the replacement base PreQ1. Zn(2+) is required as a cofactor.

The enzyme catalyses 7-aminomethyl-7-carbaguanine + guanosine(34) in tRNA = 7-aminomethyl-7-carbaguanosine(34) in tRNA + guanine. Its pathway is tRNA modification; tRNA-queuosine biosynthesis. Catalyzes the base-exchange of a guanine (G) residue with the queuine precursor 7-aminomethyl-7-deazaguanine (PreQ1) at position 34 (anticodon wobble position) in tRNAs with GU(N) anticodons (tRNA-Asp, -Asn, -His and -Tyr). Catalysis occurs through a double-displacement mechanism. The nucleophile active site attacks the C1' of nucleotide 34 to detach the guanine base from the RNA, forming a covalent enzyme-RNA intermediate. The proton acceptor active site deprotonates the incoming PreQ1, allowing a nucleophilic attack on the C1' of the ribose to form the product. After dissociation, two additional enzymatic reactions on the tRNA convert PreQ1 to queuine (Q), resulting in the hypermodified nucleoside queuosine (7-(((4,5-cis-dihydroxy-2-cyclopenten-1-yl)amino)methyl)-7-deazaguanosine). In Shouchella clausii (strain KSM-K16) (Alkalihalobacillus clausii), this protein is Queuine tRNA-ribosyltransferase.